The primary structure comprises 204 residues: Small ribosomal subunit protein uS4 (204 aa).

Residues 92-156 form the S4 RNA-binding domain; it reads RRLDALVLRS…SKVPFQVARE (65 aa).

Belongs to the universal ribosomal protein uS4 family. In terms of assembly, part of the 30S ribosomal subunit. Contacts protein S5. The interaction surface between S4 and S5 is involved in control of translational fidelity.

Its function is as follows. One of the primary rRNA binding proteins, it binds directly to 16S rRNA where it nucleates assembly of the body of the 30S subunit. Functionally, with S5 and S12 plays an important role in translational accuracy. This is Small ribosomal subunit protein uS4 from Streptomyces griseus subsp. griseus (strain JCM 4626 / CBS 651.72 / NBRC 13350 / KCC S-0626 / ISP 5235).